We begin with the raw amino-acid sequence, 237 residues long: Ribosomal RNA small subunit methyltransferase G (237 aa).

S-adenosyl-L-methionine-binding positions include G78, F83, 129-130 (AE), and R148. The segment at 218 to 237 (KKETPNKYPRKAGMPNKRPL) is disordered.

It belongs to the methyltransferase superfamily. RNA methyltransferase RsmG family.

The protein localises to the cytoplasm. Functionally, specifically methylates the N7 position of a guanine in 16S rRNA. The chain is Ribosomal RNA small subunit methyltransferase G from Streptococcus gordonii (strain Challis / ATCC 35105 / BCRC 15272 / CH1 / DL1 / V288).